The sequence spans 963 residues: Phosphoenolpyruvate carboxylase 2 (963 aa).

S11 is subject to Phosphoserine. Residues H172 and K599 contribute to the active site. S701 is modified (phosphoserine).

It belongs to the PEPCase type 1 family. Homotetramer. Requires Mg(2+) as cofactor. In terms of tissue distribution, expressed in all plant organs, with higher levels in stems and leaves.

The protein resides in the cytoplasm. The enzyme catalyses oxaloacetate + phosphate = phosphoenolpyruvate + hydrogencarbonate. By light-reversible phosphorylation. Through the carboxylation of phosphoenolpyruvate (PEP) it forms oxaloacetate, a four-carbon dicarboxylic acid source for the tricarboxylic acid cycle. The polypeptide is Phosphoenolpyruvate carboxylase 2 (PPC2) (Arabidopsis thaliana (Mouse-ear cress)).